The chain runs to 339 residues: Uridylate kinase PUMPKIN, chloroplastic (339 aa).

The N-terminal 53 residues, 1–53 (MAIPLPLTSCSPISTSSSISRTSFVPLTLRNRTFFSNQNYSRRVLISCSSSLS), are a transit peptide targeting the chloroplast. Over residues 52–79 (LSSDNGSSPDSMNGNGNGNGSSLNGQSS) the composition is skewed to low complexity. Residues 52 to 89 (LSSDNGSSPDSMNGNGNGNGSSLNGQSSFPRLPSFDGT) form a disordered region. 102-105 (KVSG) contacts ATP. Residues 110–115 (GDEEQN) form an involved in allosteric activation by GTP region. UMP is bound at residue Gly-144. Positions 145 and 149 each coordinate ATP. A UMP-binding site is contributed by Asp-165. ATP-binding positions include 180 to 184 (QATME) and 189 to 191 (PTR). 226-233 (TGNPFFTT) contacts UMP. Residues Thr-253, Phe-259, and Asp-262 each coordinate ATP.

The protein belongs to the UMP kinase family. As to quaternary structure, homomultimer. Homohexamer. Forms RNA-containing megadalton-sized complexes. In terms of tissue distribution, expressed exclusively in leaves, but not in roots.

It is found in the plastid. The protein resides in the chloroplast stroma. The enzyme catalyses UMP + ATP = UDP + ADP. The protein operates within pyrimidine metabolism; CTP biosynthesis via de novo pathway; UDP from UMP (UMPK route): step 1/1. In terms of biological role, catalyzes the reversible phosphorylation of UMP to UDP. Required for specific post-transcriptional processes of many plastid transcripts (e.g. PSI (PsaA, PsaF), PSII (D1, CP43, CP47), Cytochrome b(6)f (Cytb(6)), ATP synthase (AtpC), LHCs (LHCa3, LHCb2), and NDH (NdhH)), thus being essential for retaining photosynthetic activity in chloroplasts. Associates with group II introns of the plastid transcripts trnG-UCC, trnV-UAC, petB, petD and ndhA to stabilize corresponding precursor RNAs. The protein is Uridylate kinase PUMPKIN, chloroplastic of Arabidopsis thaliana (Mouse-ear cress).